Consider the following 282-residue polypeptide: 2-dehydro-3-deoxyphosphooctonate aldolase (282 aa).

It belongs to the KdsA family.

The protein localises to the cytoplasm. It catalyses the reaction D-arabinose 5-phosphate + phosphoenolpyruvate + H2O = 3-deoxy-alpha-D-manno-2-octulosonate-8-phosphate + phosphate. It participates in carbohydrate biosynthesis; 3-deoxy-D-manno-octulosonate biosynthesis; 3-deoxy-D-manno-octulosonate from D-ribulose 5-phosphate: step 2/3. Its pathway is bacterial outer membrane biogenesis; lipopolysaccharide biosynthesis. The sequence is that of 2-dehydro-3-deoxyphosphooctonate aldolase from Shewanella sp. (strain W3-18-1).